The following is a 329-amino-acid chain: Beta-ribofuranosylphenol 5'-phosphate synthase (329 aa).

Belongs to the beta-RFA-P synthase family. In terms of assembly, homodimer. Mg(2+) serves as cofactor.

The enzyme catalyses 5-phospho-alpha-D-ribose 1-diphosphate + 4-hydroxybenzoate + H(+) = 4-(beta-D-ribofuranosyl)phenol 5'-phosphate + CO2 + diphosphate. The catalysed reaction is 4-aminobenzoate + 5-phospho-alpha-D-ribose 1-diphosphate + H(+) = 4-(beta-D-ribofuranosyl)aminobenzene 5'-phosphate + CO2 + diphosphate. The protein operates within cofactor biosynthesis; 5,6,7,8-tetrahydromethanopterin biosynthesis. Its function is as follows. Catalyzes the condensation of 4-hydroxybenzoate (HB) with 5-phospho-alpha-D-ribose 1-diphosphate (PRPP) to produce beta-ribofuranosylphenol 5'-phosphate (beta-RFH-P). Also catalyzes the condensation of 4-aminobenzoate (pABA) with PRPP to produce beta-ribofuranosylaminobenzene 5'-phosphate (beta-RFA-P). Only 4-hydroxybenzoate is known to be biosynthesized by methanogenic archaea, but 4-aminobenzoate can be used as substrate by growing methanogens when it is present in the growth medium. The protein is Beta-ribofuranosylphenol 5'-phosphate synthase of Methanothermobacter thermautotrophicus (strain ATCC 29096 / DSM 1053 / JCM 10044 / NBRC 100330 / Delta H) (Methanobacterium thermoautotrophicum).